Reading from the N-terminus, the 313-residue chain is tRNA pseudouridine synthase B (313 aa).

A substrate-binding site is contributed by H44. D49 functions as the Nucleophile in the catalytic mechanism. Residues Y77, Y180, and L201 each coordinate substrate.

This sequence belongs to the pseudouridine synthase TruB family. Type 1 subfamily.

It carries out the reaction uridine(55) in tRNA = pseudouridine(55) in tRNA. Functionally, responsible for synthesis of pseudouridine from uracil-55 in the psi GC loop of transfer RNAs. This Hamiltonella defensa subsp. Acyrthosiphon pisum (strain 5AT) protein is tRNA pseudouridine synthase B.